The primary structure comprises 166 residues: Small ribosomal subunit protein uS5 (166 aa).

Positions 11–74 constitute an S5 DRBM domain; the sequence is LIEKLVSVKR…ENAKKNMVSV (64 aa).

Belongs to the universal ribosomal protein uS5 family. As to quaternary structure, part of the 30S ribosomal subunit. Contacts proteins S4 and S8.

In terms of biological role, with S4 and S12 plays an important role in translational accuracy. Its function is as follows. Located at the back of the 30S subunit body where it stabilizes the conformation of the head with respect to the body. The polypeptide is Small ribosomal subunit protein uS5 (Francisella tularensis subsp. tularensis (strain FSC 198)).